The following is a 427-amino-acid chain: Enolase (427 aa).

A (2R)-2-phosphoglycerate-binding site is contributed by glutamine 163. Residue glutamate 205 is the Proton donor of the active site. Aspartate 242, glutamate 288, and aspartate 315 together coordinate Mg(2+). (2R)-2-phosphoglycerate is bound by residues lysine 340, arginine 369, serine 370, and lysine 391. Lysine 340 (proton acceptor) is an active-site residue.

Belongs to the enolase family. Requires Mg(2+) as cofactor.

The protein localises to the cytoplasm. The protein resides in the secreted. It is found in the cell surface. The enzyme catalyses (2R)-2-phosphoglycerate = phosphoenolpyruvate + H2O. Its pathway is carbohydrate degradation; glycolysis; pyruvate from D-glyceraldehyde 3-phosphate: step 4/5. Catalyzes the reversible conversion of 2-phosphoglycerate (2-PG) into phosphoenolpyruvate (PEP). It is essential for the degradation of carbohydrates via glycolysis. This chain is Enolase, found in Amoebophilus asiaticus (strain 5a2).